The following is a 194-amino-acid chain: Probable GTP-binding protein EngB (194 aa).

Residues 22-194 enclose the EngB-type G domain; the sequence is PLPEVALAGR…AWKAILHAIS (173 aa). GTP is bound by residues 30 to 37, 57 to 61, 75 to 78, 142 to 145, and 174 to 176; these read GRSNVGKS, GKTQT, DVPG, TKCD, and FSS. Mg(2+) contacts are provided by S37 and T59.

Belongs to the TRAFAC class TrmE-Era-EngA-EngB-Septin-like GTPase superfamily. EngB GTPase family. Mg(2+) serves as cofactor.

Functionally, necessary for normal cell division and for the maintenance of normal septation. The chain is Probable GTP-binding protein EngB from Halalkalibacterium halodurans (strain ATCC BAA-125 / DSM 18197 / FERM 7344 / JCM 9153 / C-125) (Bacillus halodurans).